The sequence spans 932 residues: Protocadherin gamma-A7 (932 aa).

Positions 1–28 (MAAQPRGGDCRGFVLLSILLGTPWEAWA) are cleaved as a signal peptide. 6 Cadherin domains span residues 29 to 133 (GRIL…VPRF), 134 to 242 (LTEE…TPVF), 243 to 347 (SLPQ…APEV), 348 to 452 (TMTS…PPTF), 453 to 562 (PHSS…PPEI), and 570 to 682 (DGST…EPSD). The Extracellular segment spans residues 29–692 (GRILYSVSEE…GPYNYDLTLY (664 aa)). N-linked (GlcNAc...) asparagine glycans are attached at residues Asn-419 and Asn-545. The helical transmembrane segment at 693–713 (LVVAVAAVSCVFLAFVLVLLA) threads the bilayer. Residues 714-932 (LRLRRWHKSR…KKKSGKKEKK (219 aa)) lie on the Cytoplasmic side of the membrane. Disordered regions lie at residues 804–841 (VPSI…WPNN) and 902–932 (ATLT…KEKK). Residues 806–841 (SIQQAPPNTDWRFSQAQRPGTSGSQNGDDTGTWPNN) are compositionally biased toward polar residues. A compositionally biased stretch (basic residues) spans 922-932 (NKKKSGKKEKK).

It is found in the cell membrane. Its function is as follows. Potential calcium-dependent cell-adhesion protein. May be involved in the establishment and maintenance of specific neuronal connections in the brain. The sequence is that of Protocadherin gamma-A7 (PCDHGA7) from Pan troglodytes (Chimpanzee).